The primary structure comprises 1043 residues: Calcium-transporting ATPase 1, plasma membrane-type (1043 aa).

Residues 1–178 (MSFIRKKSME…FLWDASQDMT (178 aa)) are Cytoplasmic-facing. 2 helical membrane passes run 179-199 (LLLL…TEGW) and 202-222 (GMYD…ITAA). The Cytoplasmic portion of the chain corresponds to 223–258 (SDYKQSLQFRDLDKEKKKIDVQVTRDGYRQKVSIYD). Transmembrane regions (helical) follow at residues 259–279 (IVVG…DGLF) and 356–376 (VATI…TVLM). At 377–395 (ARFLLGKAGAPGGLLRWRM) the chain is on the cytoplasmic side. A helical membrane pass occupies residues 396 to 416 (VDALAVLNFFAVAVTIIVVAV). Residue Asp460 is the 4-aspartylphosphate intermediate of the active site. 2 residues coordinate Mg(2+): Asp761 and Asp765. The helical transmembrane segment at 824-844 (LTVNVVALMVNFISASFTGSA) threads the bilayer. Pro845 is a topological domain (cytoplasmic). The next 2 helical transmembrane spans lie at 846–866 (LTIV…ALAL) and 891–911 (VMWR…GVLL). Residues 912–955 (LRGKSLLQINGPQADSLLNTFVFNTFVFCQVFNEVNSREMEKIN) lie on the Cytoplasmic side of the membrane. Transmembrane regions (helical) follow at residues 956-976 (VFSG…TAGF) and 998-1018 (WLTS…LKCI). The Cytoplasmic segment spans residues 1019 to 1043 (PVESGSDASDRHDGYRPIPTGPSAV). Residues 1023–1043 (GSDASDRHDGYRPIPTGPSAV) form a disordered region.

It belongs to the cation transport ATPase (P-type) (TC 3.A.3) family. Type IIB subfamily.

It localises to the membrane. It catalyses the reaction Ca(2+)(in) + ATP + H2O = Ca(2+)(out) + ADP + phosphate + H(+). Activated by calmodulin. This magnesium-dependent enzyme catalyzes the hydrolysis of ATP coupled with the translocation of calcium from the cytosol out of the cell, into the endoplasmic reticulum, or into organelles. The sequence is that of Calcium-transporting ATPase 1, plasma membrane-type from Oryza sativa subsp. japonica (Rice).